The chain runs to 1044 residues: Diacylglycerol lipase-alpha (1044 aa).

At 1–22 (MPGIVVFRRRWSVGSDDLVLPA) the chain is on the cytoplasmic side. The helical transmembrane segment at 23-43 (IFLFLLHTTWFVILSVVLFGL) threads the bilayer. Topologically, residues 44 to 60 (VYNPHEACSLNLVDHGR) are extracellular. A helical transmembrane segment spans residues 61–81 (GYLGILLSCMIAEMAIIWLSM). Residues 82-101 (RGGILYTEPRDSMQYVLYVR) lie on the Cytoplasmic side of the membrane. The chain crosses the membrane as a helical span at residues 102-122 (LAILVIEFIYAIVGIVWLTQY). Residues 123–136 (YTSCNDLTAKNVTL) lie on the Extracellular side of the membrane. Asn133 is a glycosylation site (N-linked (GlcNAc...) asparagine). A helical membrane pass occupies residues 137–157 (GMVVCNWVVILSVCITVLCVF). At 158–1044 (DPTGRTFVKL…KQDDLVISAR (887 aa)) the chain is on the cytoplasmic side. Catalysis depends on charge relay system residues Ser472 and Asp524. Phosphoserine occurs at positions 728, 730, 733, 744, 784, 786, 808, 810, 835, 849, and 954. Residues 848 to 897 (LSKHSQDTQPLEAALGSGGVTPERPPSATIEEEEAAGGSEGGGVAPRGEL) form a disordered region. Residues 1013 to 1044 (QECLATDKIRTSTPTGHGASPTKQDDLVISAR) form a disordered region. At Thr1025 the chain carries Phosphothreonine.

This sequence belongs to the AB hydrolase superfamily. Lipase family. Interacts (via C-terminal) with CAMK2A; leading to the phosphorylation and inhibition of DAGLA enzymatic activity. Interacts (via PPXXF motif) with HOMER1 and HOMER2; this interaction is required for DAGLA membrane localization. It depends on Ca(2+) as a cofactor. Post-translationally, phosphorylated at Ser-784 and Ser-810 by CAMK2A; phosphorylation by CAMK2A inhibits diacylglycerol lipase activity. In terms of tissue distribution, highly expressed by principal cells in the hippocampus. In embryonic brains, it is present in axonal tracts, while in adults it localizes to dendritic fields, correlating with the developmental change in requirement for 2-AG synthesis from the pre- to the postsynaptic compartment. Concentrated in heads of dendritic spines throughout the hippocampal formation. Highly compartmentalized into a wide perisynaptic annulus around the postsynaptic density of axospinous contacts but not intrasynaptically (at protein level).

The protein localises to the cell membrane. Its subcellular location is the cell projection. The protein resides in the dendritic spine membrane. It is found in the postsynaptic density membrane. It localises to the early endosome membrane. It catalyses the reaction a 1,2-diacyl-sn-glycerol + H2O = a 2-acylglycerol + a fatty acid + H(+). The catalysed reaction is 1-octadecanoyl-2-(5Z,8Z,11Z,14Z-eicosatetraenoyl)-sn-glycerol + H2O = 2-(5Z,8Z,11Z,14Z-eicosatetraenoyl)-glycerol + octadecanoate + H(+). The enzyme catalyses 1,2-di-(9Z-octadecenoyl)-sn-glycerol + H2O = 2-(9Z-octadecenoyl)-glycerol + (9Z)-octadecenoate + H(+). It carries out the reaction 1-(9Z-octadecenoyl)-2-(5Z,8Z,11Z,14Z-eicosatetraenoyl)-sn-glycerol + H2O = 2-(5Z,8Z,11Z,14Z-eicosatetraenoyl)-glycerol + (9Z)-octadecenoate + H(+). It catalyses the reaction 1-(9Z-octadecenoyl)-2-octadecanoyl-sn-glycerol + H2O = 2-octadecanoylglycerol + (9Z)-octadecenoate + H(+). The catalysed reaction is 1-(9Z-octadecenoyl)-2-(9Z,12Z-octadecadienoyl)-sn-glycerol + H2O = 2-(9Z,12Z-octadecadienoyl)-glycerol + (9Z)-octadecenoate + H(+). The enzyme catalyses 1-(9Z-octadecenoyl)-2-O-(5Z,8Z,11Z,14Z-eicosatetraenyl)-sn-glycerol + H2O = 2-O-(5Z,8Z,11Z,14Z)-eicosatetraenylglycerol + (9Z)-octadecenoate + H(+). Its activity is regulated as follows. Inhibited by 1,2,3-triazole urea covalent inhibitor KT172, DH376 and DO34. Inhibited by p-hydroxy-mercuri-benzoate and HgCl(2), but not to PMSF. Also inhibited by RHC80267. Diacylglycerol lipase activity is inhibited by the phosphorylation of Ser-784 and Ser-810 by CAMK2A. Its function is as follows. Serine hydrolase that hydrolyzes arachidonic acid-esterified diacylglycerols (DAGs) to produce the principal endocannabinoid (eCB), 2-arachidonoylglycerol (2-AG). Preferentially hydrolyzes sn-1 fatty acids from diacylglycerols (DAG) that contain arachidonic acid (AA) esterified at the sn-2 position to biosynthesize 2-AG. Has negligible activity against other lipids including monoacylglycerols and phospholipids. Plays a key role in regulating 2-AG signaling in the central nervous system (CNS). Controls the activity of 2-AG as a retrograde messenger at neuronal synapses. Supports axonal growth during development and adult neurogenesis. Plays a role for eCB signaling in the physiological regulation of anxiety and depressive behaviors. Also regulates neuroinflammatory responses in the brain, in particular, LPS-induced microglial activation. This is Diacylglycerol lipase-alpha (Dagla) from Mus musculus (Mouse).